The primary structure comprises 162 residues: ATP synthase subunit b (162 aa).

A helical transmembrane segment spans residues 6 to 25 (TLFTLVTFLVLMLAVGKVAW).

This sequence belongs to the ATPase B chain family. F-type ATPases have 2 components, F(1) - the catalytic core - and F(0) - the membrane proton channel. F(1) has five subunits: alpha(3), beta(3), gamma(1), delta(1), epsilon(1). F(0) has three main subunits: a(1), b(2) and c(10-14). The alpha and beta chains form an alternating ring which encloses part of the gamma chain. F(1) is attached to F(0) by a central stalk formed by the gamma and epsilon chains, while a peripheral stalk is formed by the delta and b chains.

Its subcellular location is the cell membrane. In terms of biological role, f(1)F(0) ATP synthase produces ATP from ADP in the presence of a proton or sodium gradient. F-type ATPases consist of two structural domains, F(1) containing the extramembraneous catalytic core and F(0) containing the membrane proton channel, linked together by a central stalk and a peripheral stalk. During catalysis, ATP synthesis in the catalytic domain of F(1) is coupled via a rotary mechanism of the central stalk subunits to proton translocation. Its function is as follows. Component of the F(0) channel, it forms part of the peripheral stalk, linking F(1) to F(0). This chain is ATP synthase subunit b, found in Lacticaseibacillus paracasei (strain ATCC 334 / BCRC 17002 / CCUG 31169 / CIP 107868 / KCTC 3260 / NRRL B-441) (Lactobacillus paracasei).